A 289-amino-acid chain; its full sequence is Pyridoxal kinase PdxY (289 aa).

Substrate-binding positions include S9 and T44–Q45. ATP contacts are provided by D112, V144, E149, and K182. D221 contacts substrate.

This sequence belongs to the pyridoxine kinase family. PdxY subfamily. Homodimer. It depends on Mg(2+) as a cofactor.

The catalysed reaction is pyridoxal + ATP = pyridoxal 5'-phosphate + ADP + H(+). It participates in cofactor metabolism; pyridoxal 5'-phosphate salvage; pyridoxal 5'-phosphate from pyridoxal: step 1/1. Its function is as follows. Pyridoxal kinase involved in the salvage pathway of pyridoxal 5'-phosphate (PLP). Catalyzes the phosphorylation of pyridoxal to PLP. This Vibrio parahaemolyticus serotype O3:K6 (strain RIMD 2210633) protein is Pyridoxal kinase PdxY.